Reading from the N-terminus, the 107-residue chain is uncharacterized protein (107 aa).

The chain crosses the membrane as a helical span at residues 37–59; sequence MVFSFLTVMPGDFIKCLFLRFFV.

Its subcellular location is the membrane. This is an uncharacterized protein from Saccharomyces cerevisiae (strain ATCC 204508 / S288c) (Baker's yeast).